Consider the following 1366-residue polypeptide: Collagen alpha-2(I) chain (1366 aa).

A signal peptide spans 1-22 (MLSFVDTRTLLLLAVTSCLATC). Glutamine 23 is modified (pyrrolidone carboxylic acid). Residues 23–79 (QSLQEATARKGPTGDRGPRGERGPPGPPGRDGDDGIPGPPGPPGPPGPPGLGGNFAA) constitute a propeptide, N-terminal propeptide. Positions 27–1131 (EATARKGPTG…PRSPPSLRPK (1105 aa)) are disordered. Residues 34-44 (PTGDRGPRGER) show a composition bias toward basic and acidic residues. The segment covering 59 to 71 (PGPPGPPGPPGPP) has biased composition (pro residues). Allysine is present on lysine 84. The segment covering 84–94 (KGVGLGPGPMG) has biased composition (gly residues). A compositionally biased stretch (low complexity) spans 95 to 132 (LMGPRGPPGASGAPGPQGFQGPAGEPGEPGQTGPAGAR). A compositionally biased stretch (basic and acidic residues) spans 141–155 (AGEDGHPGKPGRPGE). Lysine 177 carries the post-translational modification 5-hydroxylysine; alternate. Lysine 177 carries O-linked (Gal...) hydroxylysine; alternate glycosylation. Low complexity-rich tracts occupy residues 225–254 (VGAP…SAGP), 279–293 (AGPR…VSGP), 300–321 (PGAN…AGAP), 330–345 (PGPV…RGIV), 384–408 (NGEA…RGLP), 423–434 (RGATGPAGVRGP), 470–489 (LPGI…RGEP), and 513–531 (AGLA…NGAQ). Residues 538 to 547 (GVQGGKGEQG) show a composition bias toward gly residues. Residues 594-611 (PGESGAAGPSGPIGSRGP) show a composition bias toward low complexity. Gly residues predominate over residues 634–643 (GASGPGGLPG). 2 stretches are compositionally biased toward low complexity: residues 668–690 (NPGR…AGAT) and 717–737 (VGPA…QPGA). Residues 738-747 (KGERGTKGPK) are compositionally biased toward basic and acidic residues. The segment covering 756 to 765 (TGPIGSAGPS) has biased composition (low complexity). Residues 775–784 (GSRGDGGPPG) are compositionally biased toward gly residues. 5 stretches are compositionally biased toward low complexity: residues 785 to 795 (ATGFPGAAGRT), 863 to 876 (PQGL…LGLP), 893 to 932 (EPGP…NPGN), 951 to 974 (PGNI…PTGK), and 981 to 1001 (PGPA…PSGP). Residues 1005–1016 (RGDKGEPGEKGP) show a composition bias toward basic and acidic residues. A compositionally biased stretch (pro residues) spans 1089 to 1103 (AGPPGPPGPPGPPGP). A propeptide spans 1120-1366 (DQPRSPPSLR…RVDVGPVCFK (247 aa)) (C-terminal propeptide). The region spanning 1133-1366 (YEVDATLKSL…RVDVGPVCFK (234 aa)) is the Fibrillar collagen NC1 domain. Disulfide bonds link cysteine 1163-cysteine 1195, cysteine 1203-cysteine 1364, and cysteine 1272-cysteine 1317. Residues aspartate 1181, asparagine 1183, glutamine 1184, cysteine 1186, and aspartate 1189 each contribute to the Ca(2+) site.

The protein belongs to the fibrillar collagen family. Trimers of one alpha 2(I) and two alpha 1(I) chains. Interacts (via C-terminus) with TMEM131 (via PapD-L domain); the interaction is direct and is involved in assembly and TRAPPIII ER-to-Golgi transport complex-dependent secretion of collagen. Prolines at the third position of the tripeptide repeating unit (G-X-Y) are hydroxylated in some or all of the chains. In terms of tissue distribution, forms the fibrils of tendon, ligaments and bones. In bones the fibrils are mineralized with calcium hydroxyapatite.

The protein resides in the secreted. Its subcellular location is the extracellular space. The protein localises to the extracellular matrix. Type I collagen is a member of group I collagen (fibrillar forming collagen). The protein is Collagen alpha-2(I) chain (COL1A2) of Canis lupus familiaris (Dog).